Consider the following 206-residue polypeptide: Cytochrome c (206 aa).

3 consecutive transmembrane segments (helical) span residues 10–30, 49–69, and 76–96; these read IALA…VSFL, FMGW…LGKM, and KWFL…FLSL. Residues C152, C155, H156, and M182 each contribute to the heme site.

Monomer. Component of the photosynthetic reaction center composed of protein subunits PscA, PscC, PscB and PscD. The reaction center interacts with FmoA (which forms the Fenna-Matthews-Olson (FMO) complex). The reaction center/FmoA complex has two PscA subunits, one PscB and one PscD subunit, probably two FmoA complexes and at least one PscC subunit. Post-translationally, binds 1 heme group per subunit.

It localises to the cell inner membrane. Functionally, monoheme cytochrome which is the immediate electron donor to P840 of the photosynthetic reaction center complex. The chain is Cytochrome c (pscC) from Chlorobaculum tepidum (strain ATCC 49652 / DSM 12025 / NBRC 103806 / TLS) (Chlorobium tepidum).